The chain runs to 284 residues: Acetylglutamate kinase (284 aa).

Substrate-binding positions include 64–65 (GG), arginine 86, and asparagine 181.

This sequence belongs to the acetylglutamate kinase family. ArgB subfamily.

The protein localises to the cytoplasm. It catalyses the reaction N-acetyl-L-glutamate + ATP = N-acetyl-L-glutamyl 5-phosphate + ADP. It functions in the pathway amino-acid biosynthesis; L-arginine biosynthesis; N(2)-acetyl-L-ornithine from L-glutamate: step 2/4. In terms of biological role, catalyzes the ATP-dependent phosphorylation of N-acetyl-L-glutamate. This chain is Acetylglutamate kinase, found in Wolinella succinogenes (strain ATCC 29543 / DSM 1740 / CCUG 13145 / JCM 31913 / LMG 7466 / NCTC 11488 / FDC 602W) (Vibrio succinogenes).